A 395-amino-acid polypeptide reads, in one-letter code: Phosphoglycerate kinase (395 aa).

Substrate contacts are provided by residues 20–22 (DFN), R36, 59–62 (HLGR), R120, and R157. Residues K208, G296, E327, and 353–356 (GGDT) each bind ATP.

Belongs to the phosphoglycerate kinase family. As to quaternary structure, monomer.

The protein resides in the cytoplasm. The enzyme catalyses (2R)-3-phosphoglycerate + ATP = (2R)-3-phospho-glyceroyl phosphate + ADP. Its pathway is carbohydrate degradation; glycolysis; pyruvate from D-glyceraldehyde 3-phosphate: step 2/5. In Tropheryma whipplei (strain Twist) (Whipple's bacillus), this protein is Phosphoglycerate kinase.